The sequence spans 895 residues: Zinc finger protein 281 (895 aa).

Disordered regions lie at residues 1–44 (MKIG…EMEP) and 63–113 (FTRP…AFPS). Residue K2 forms a Glycyl lysine isopeptide (Lys-Gly) (interchain with G-Cter in SUMO2) linkage. The segment covering 7–36 (FLSGGGGTGSSGGSGSGGGGSGGGGGGGSS) has biased composition (gly residues). Glycyl lysine isopeptide (Lys-Gly) (interchain with G-Cter in SUMO2) cross-links involve residues R65, K101, and K128. Basic and acidic residues-rich tracts occupy residues 130-140 (EKPADPEEQQS) and 202-218 (RTDD…DTNV). 2 disordered regions span residues 130 to 149 (EKPA…HHHY) and 183 to 253 (HVQQ…EGAI). Glycyl lysine isopeptide (Lys-Gly) (interchain with G-Cter in SUMO2) cross-links involve residues K213, K219, K225, K232, K242, and K259. 3 consecutive C2H2-type zinc fingers follow at residues 261 to 283 (HICD…VLIH), 289 to 311 (FQCS…EKIH), and 317 to 339 (FGCD…KRTH). Glycyl lysine isopeptide (Lys-Gly) (interchain with G-Cter in SUMO2) cross-links involve residues K301 and K325. Residues 345–367 (YKCDTCQQYFSRTDRLLKHRRTC) form a C2H2-type 4; atypical zinc finger. K373 participates in a covalent cross-link: Glycyl lysine isopeptide (Lys-Gly) (interchain with G-Cter in SUMO2). Positions 377-427 (SAEPGSSNHTNMGNLAVLSQGNTSSSRRKTKSKSIAIENKEQKTGKTNESQ) are disordered. The segment covering 379-398 (EPGSSNHTNMGNLAVLSQGN) has biased composition (polar residues). Position 395 is a phosphoserine (S395). Glycyl lysine isopeptide (Lys-Gly) (interchain with G-Cter in SUMO2) cross-links involve residues K409, K416, K460, and K477. Position 484 is a phosphoserine (S484). Glycyl lysine isopeptide (Lys-Gly) (interchain with G-Cter in SUMO2) cross-links involve residues K493, K498, K539, K599, K617, and K622. Positions 638 to 660 (SGEHSELVQEENLSPGTQTPSND) are disordered. Polar residues predominate over residues 648–660 (ENLSPGTQTPSND). A Phosphoserine modification is found at S651. Glycyl lysine isopeptide (Lys-Gly) (interchain with G-Cter in SUMO2) cross-links involve residues K661 and K670. Residues 778 to 789 (SSAFQSSSQKLT) show a composition bias toward polar residues. The interval 778–817 (SSAFQSSSQKLTSQKEQKNLESSTGFQIPSQELASQIDPQ) is disordered. A Phosphoserine modification is found at S785. Glycyl lysine isopeptide (Lys-Gly) (interchain with G-Cter in SUMO2) cross-links involve residues K787, K792, and K795. Residues 797-815 (LESSTGFQIPSQELASQID) are compositionally biased toward polar residues. S807 is modified (phosphoserine). Glycyl lysine isopeptide (Lys-Gly) (interchain with G-Cter in SUMO2) cross-links involve residues K818 and K840. A Phosphothreonine modification is found at T888.

The protein belongs to the krueppel C2H2-type zinc-finger protein family.

It localises to the nucleus. In terms of biological role, transcription repressor that plays a role in regulation of embryonic stem cells (ESCs) differentiation. Required for ESCs differentiation and acts by mediating autorepression of NANOG in ESCs: binds to the NANOG promoter and promotes association of NANOG protein to its own promoter and recruits the NuRD complex, which deacetylates histones. Not required for establishement and maintenance of ESCs. Represses the transcription of a number of genes including GAST, ODC1 and VIM. Binds to the G-rich box in the enhancer region of these genes. The polypeptide is Zinc finger protein 281 (ZNF281) (Homo sapiens (Human)).